Reading from the N-terminus, the 522-residue chain is Vicilin-like seed storage protein At4g36700 (522 aa).

The first 25 residues, 1-25, serve as a signal peptide directing secretion; the sequence is MTRFAVLPLSVLLLVLLFLCTESLA. Asn-206, Asn-303, Asn-341, Asn-374, and Asn-414 each carry an N-linked (GlcNAc...) asparagine glycan. In terms of domain architecture, Cupin type-1 spans 265-421; the sequence is FNVFESEPDF…SLNVSSVTID (157 aa). The tract at residues 457-522 is disordered; it reads DERKRRHDER…EWEMEGEEES (66 aa). Composition is skewed to basic and acidic residues over residues 466 to 491 and 501 to 515; these read RKKEEEEAKREEEERRKREEEEEKKR and EELRERQLPMEKEWE.

Belongs to the 7S seed storage protein family.

In terms of biological role, seed storage protein. This chain is Vicilin-like seed storage protein At4g36700, found in Arabidopsis thaliana (Mouse-ear cress).